A 1034-amino-acid polypeptide reads, in one-letter code: DNA polymerase I B, chloroplastic/mitochondrial (1034 aa).

The N-terminal 55 residues, Met-1 to Asp-55, are a transit peptide targeting the chloroplast and mitochondrion. The 3'-5' exonuclease domain maps to Ala-270–Gln-468. The tract at residues His-700–Trp-1030 is polymerase.

This sequence belongs to the DNA polymerase type-A family. As to expression, expressed in shoot apical meristem.

It localises to the mitochondrion. The protein resides in the plastid. Its subcellular location is the chloroplast. It catalyses the reaction DNA(n) + a 2'-deoxyribonucleoside 5'-triphosphate = DNA(n+1) + diphosphate. With respect to regulation, not inhibited by aphidicolin. Its function is as follows. In addition to polymerase activity, this DNA polymerase exhibits 5'-3' exonuclease activity. Required for DNA replication and accumulation in plastids and mitochondria. The polypeptide is DNA polymerase I B, chloroplastic/mitochondrial (POLIB) (Arabidopsis thaliana (Mouse-ear cress)).